We begin with the raw amino-acid sequence, 304 residues long: Nod factor export ATP-binding protein I (304 aa).

The ABC transporter domain occupies Ile6–Tyr236. Gly38 to Thr45 provides a ligand contact to ATP.

Belongs to the ABC transporter superfamily. Lipooligosaccharide exporter (TC 3.A.1.102) family. The complex is composed of two ATP-binding proteins (NodI) and two transmembrane proteins (NodJ).

It is found in the cell inner membrane. Functionally, part of the ABC transporter complex NodIJ involved in the export of the nodulation factors (Nod factors), the bacterial signal molecules that induce symbiosis and subsequent nodulation induction. Nod factors are LCO (lipo-chitin oligosaccharide), a modified beta-1,4-linked N-acetylglucosamine oligosaccharide. This subunit is responsible for energy coupling to the transport system. This Burkholderia lata (strain ATCC 17760 / DSM 23089 / LMG 22485 / NCIMB 9086 / R18194 / 383) protein is Nod factor export ATP-binding protein I.